The following is a 681-amino-acid chain: UvrABC system protein C (681 aa).

The GIY-YIG domain occupies 16–95 (DSPGVYKFRD…IKEYDPRFNV (80 aa)). Positions 208–243 (GTYIRRLERQMTDAAEEMEYEKAARLRDDIGALKKA) constitute a UVR domain. Residues 650–681 (EIMEDEEPGTTAGSSQEPVSAGTSDERRGQET) form a disordered region. Residues 660 to 672 (TAGSSQEPVSAGT) show a composition bias toward polar residues.

Belongs to the UvrC family. Interacts with UvrB in an incision complex.

Its subcellular location is the cytoplasm. Its function is as follows. The UvrABC repair system catalyzes the recognition and processing of DNA lesions. UvrC both incises the 5' and 3' sides of the lesion. The N-terminal half is responsible for the 3' incision and the C-terminal half is responsible for the 5' incision. This Streptomyces avermitilis (strain ATCC 31267 / DSM 46492 / JCM 5070 / NBRC 14893 / NCIMB 12804 / NRRL 8165 / MA-4680) protein is UvrABC system protein C.